A 192-amino-acid chain; its full sequence is Potassium channel HX13_20290 (192 aa).

A helical transmembrane segment spans residues 1-24 (MTKGRLEAFSDGVLAIIITIMVLE). Residues 5–11 (RLEAFSD) carry the RxxxFSD motif motif. A topological domain (cytoplasmic) is located at residue L25. The interval 26–29 (KVPE) is short helix H1. The Extracellular segment spans residues 26–39 (KVPEGSSWASLQPI). The tract at residues 31–37 (SSWASLQ) is short helix H2. A helical transmembrane segment spans residues 40 to 65 (LPRFLAYIFSFIYVGIYWNNHHHLFQ). Residues 66–71 (TVKKVN) are Cytoplasmic-facing. A helical transmembrane segment spans residues 72-93 (GSILWANLHLLFWLSLMPIATE). At 94–101 (WIGTSHFA) the chain is on the extracellular side. Residues 102 to 126 (QNPVATYGIGLIMSAIAYTILENVI) form a helical membrane-spanning segment. Residues 127–133 (IRCEGEN) lie on the Cytoplasmic side of the membrane. The chain crosses the membrane as a helical span at residues 134–162 (SKLKEAIHSKFKEYISIIFYVLGIATSFF). The Extracellular segment spans residues 163–164 (YP). The helical transmembrane segment at 165 to 180 (YIAIGFYYLVALIWLI) threads the bilayer. Residues 181–192 (PDKRIEKSLKEN) lie on the Cytoplasmic side of the membrane.

The protein belongs to the TMEM175 family. Homotetramer.

The protein resides in the membrane. The enzyme catalyses K(+)(in) = K(+)(out). Potassium channel. This is Potassium channel HX13_20290 from Chryseobacterium sp. (strain P1-3).